Here is an 80-residue protein sequence, read N- to C-terminus: Exodeoxyribonuclease 7 small subunit (80 aa).

The protein belongs to the XseB family. As to quaternary structure, heterooligomer composed of large and small subunits.

It localises to the cytoplasm. The enzyme catalyses Exonucleolytic cleavage in either 5'- to 3'- or 3'- to 5'-direction to yield nucleoside 5'-phosphates.. Its function is as follows. Bidirectionally degrades single-stranded DNA into large acid-insoluble oligonucleotides, which are then degraded further into small acid-soluble oligonucleotides. The chain is Exodeoxyribonuclease 7 small subunit from Edwardsiella ictaluri (strain 93-146).